Here is a 180-residue protein sequence, read N- to C-terminus: MRILGIDPGLRVTGFGVIDVSGHRLAYVTSGVIRTPTADLATRLGTIFQGVSTIVREHAPDQAAIEKVFVNVNPQSTLLLGQARGAAICGLVAGGLPVAEYTALQLKQAVVGYGRATKTQMQEMVTRLLNLSGQPGSDAADALGMAICHAHGGNTLSTLGGLAPALAQKGLRVRRGRLVG.

Residues aspartate 7, glutamate 66, and aspartate 138 contribute to the active site. Mg(2+)-binding residues include aspartate 7, glutamate 66, and aspartate 138.

It belongs to the RuvC family. As to quaternary structure, homodimer which binds Holliday junction (HJ) DNA. The HJ becomes 2-fold symmetrical on binding to RuvC with unstacked arms; it has a different conformation from HJ DNA in complex with RuvA. In the full resolvosome a probable DNA-RuvA(4)-RuvB(12)-RuvC(2) complex forms which resolves the HJ. Requires Mg(2+) as cofactor.

The protein resides in the cytoplasm. It catalyses the reaction Endonucleolytic cleavage at a junction such as a reciprocal single-stranded crossover between two homologous DNA duplexes (Holliday junction).. The RuvA-RuvB-RuvC complex processes Holliday junction (HJ) DNA during genetic recombination and DNA repair. Endonuclease that resolves HJ intermediates. Cleaves cruciform DNA by making single-stranded nicks across the HJ at symmetrical positions within the homologous arms, yielding a 5'-phosphate and a 3'-hydroxyl group; requires a central core of homology in the junction. The consensus cleavage sequence is 5'-(A/T)TT(C/G)-3'. Cleavage occurs on the 3'-side of the TT dinucleotide at the point of strand exchange. HJ branch migration catalyzed by RuvA-RuvB allows RuvC to scan DNA until it finds its consensus sequence, where it cleaves and resolves the cruciform DNA. The sequence is that of Crossover junction endodeoxyribonuclease RuvC from Burkholderia orbicola (strain AU 1054).